The sequence spans 355 residues: UDP-N-acetylglucosamine--N-acetylmuramyl-(pentapeptide) pyrophosphoryl-undecaprenol N-acetylglucosamine transferase (355 aa).

UDP-N-acetyl-alpha-D-glucosamine contacts are provided by residues 15-17 (TGG), asparagine 127, arginine 163, serine 191, isoleucine 244, 263-268 (ALTVSE), and glutamine 288.

Belongs to the glycosyltransferase 28 family. MurG subfamily.

The protein localises to the cell inner membrane. The enzyme catalyses di-trans,octa-cis-undecaprenyl diphospho-N-acetyl-alpha-D-muramoyl-L-alanyl-D-glutamyl-meso-2,6-diaminopimeloyl-D-alanyl-D-alanine + UDP-N-acetyl-alpha-D-glucosamine = di-trans,octa-cis-undecaprenyl diphospho-[N-acetyl-alpha-D-glucosaminyl-(1-&gt;4)]-N-acetyl-alpha-D-muramoyl-L-alanyl-D-glutamyl-meso-2,6-diaminopimeloyl-D-alanyl-D-alanine + UDP + H(+). Its pathway is cell wall biogenesis; peptidoglycan biosynthesis. Cell wall formation. Catalyzes the transfer of a GlcNAc subunit on undecaprenyl-pyrophosphoryl-MurNAc-pentapeptide (lipid intermediate I) to form undecaprenyl-pyrophosphoryl-MurNAc-(pentapeptide)GlcNAc (lipid intermediate II). The sequence is that of UDP-N-acetylglucosamine--N-acetylmuramyl-(pentapeptide) pyrophosphoryl-undecaprenol N-acetylglucosamine transferase from Salmonella gallinarum (strain 287/91 / NCTC 13346).